We begin with the raw amino-acid sequence, 931 residues long: Envelope glycoprotein B (931 aa).

An N-terminal signal peptide occupies residues 1–71; sequence MSPCGYYSKW…FSMFVTAVVS (71 aa). Topologically, residues 72-786 are virion surface; that stretch reads VSPSSFYESL…HGFTTFLSNP (715 aa). Cystine bridges form between C122-C584, C139-C540, C213-C277, C369-C417, and C608-C645. N147 carries N-linked (GlcNAc...) asparagine; by host glycosylation. The interval 179 to 185 is involved in fusion and/or binding to host membrane; it reads AWAGSSY. Residue N257 is glycosylated (N-linked (GlcNAc...) asparagine; by host). The segment at 264–271 is involved in fusion and/or binding to host membrane; it reads GTPGTYRT. Residues N435, N503, N620, and N686 are each glycosylated (N-linked (GlcNAc...) asparagine; by host). Hydrophobic membrane proximal region stretches follow at residues 731–784 and 764–784; these read IDKV…TFLS and VVLG…TFLS. A helical membrane pass occupies residues 787–807; sequence FGALAVGLLVLAGLVAAFFAY. The Intravirion portion of the chain corresponds to 808–931; it reads RYVLKLKTSP…RVRTENVTGV (124 aa). The short motif at 881–884 is the Golgi targeting element; it reads YMTL. The Di-leucine internalization motif signature appears at 904 to 906; it reads LLT. An Internalization motif motif is present at residues 920–923; sequence YSRV.

Belongs to the herpesviridae glycoprotein B family. Homotrimer; disulfide-linked. Binds to heparan sulfate proteoglycans. Interacts with gH/gL heterodimer. Interacts with gE. A proteolytic cleavage by host furin generates two subunits that remain linked by disulfide bonds.

The protein localises to the virion membrane. The protein resides in the host cell membrane. It is found in the host endosome membrane. It localises to the host Golgi apparatus membrane. Envelope glycoprotein that forms spikes at the surface of virion envelope. Essential for the initial attachment to heparan sulfate moieties of the host cell surface proteoglycans. Involved in fusion of viral and cellular membranes leading to virus entry into the host cell. Following initial binding to its host receptors, membrane fusion is mediated by the fusion machinery composed at least of gB and the heterodimer gH/gL. May be involved in the fusion between the virion envelope and the outer nuclear membrane during virion egress. The protein is Envelope glycoprotein B of Varicella-zoster virus (strain Dumas) (HHV-3).